A 739-amino-acid polypeptide reads, in one-letter code: Mitochondrial proton/calcium exchanger protein (739 aa).

The N-terminal 115 residues, 1–115, are a transit peptide targeting the mitochondrion; that stretch reads MASILLRSCR…RGWHSSRPVR (115 aa). Residues 115-136 are a coiled coil; the sequence is RDDSVVEKSLKSLKDKNKKLEE. Residues 116–208 lie on the Mitochondrial intermembrane side of the membrane; that stretch reads DDSVVEKSLK…FLRICADLFR (93 aa). A Phosphothreonine; by PINK1 modification is found at Thr192. Residues 209 to 229 traverse the membrane as a helical segment; sequence LVPFLVFVVVPFMEFLLPVAV. The Mitochondrial matrix segment spans residues 230-739; it reads KLFPNMLPST…AEKEVAEVKS (510 aa). In terms of domain architecture, Letm1 RBD spans 252–537; it reads KELRVKLELA…TAPVLEGLKE (286 aa). 2 coiled-coil regions span residues 462–490 and 537–627; these read NKAKLEATLQEEAAIQQEHREKELQKRSE and EEEI…SQLE. Lys597 is modified (N6-acetyllysine). An EF-hand domain is found at 663–698; sequence IPESKLTSLAAALDENKDGKVNIDDLVKVIELVDKE. Positions 676, 678, 680, 682, and 687 each coordinate Ca(2+). Residues 708–739 are a coiled coil; the sequence is AEIVATLEKEEKVEEKEKAKEKAEKEVAEVKS. The interval 718 to 739 is disordered; it reads EKVEEKEKAKEKAEKEVAEVKS.

The protein belongs to the LETM1 family. In terms of assembly, homohexamer. Can form 2 complexes: a major (300 kDa) and a minor complex (500-600 kDa). Interacts with BCS1L. Interacts with GHITM. PINK1-mediated phosphorylation at Thr-192, positively regulates its mitochondrial calcium transport activity.

It is found in the mitochondrion inner membrane. The enzyme catalyses Ca(2+)(in) + 2 H(+)(out) = Ca(2+)(out) + 2 H(+)(in). It catalyses the reaction K(+)(in) + H(+)(out) = K(+)(out) + H(+)(in). Inhibited by ruthenium red or its derivative Ru360. In terms of biological role, plays an important role in maintenance of mitochondrial morphology and in mediating either calcium or potassium/proton antiport. Mediates proton-dependent calcium efflux from mitochondrion. Also functions as an electroneutral mitochondrial proton/potassium exchanger. Crucial for the maintenance of mitochondrial tubular networks and for the assembly of the supercomplexes of the respiratory chain. Required for the maintenance of the tubular shape and cristae organization. The chain is Mitochondrial proton/calcium exchanger protein from Homo sapiens (Human).